The following is a 2000-amino-acid chain: Myosin-14 (2000 aa).

Ala-2 carries the post-translational modification N-acetylalanine. Thr-33 bears the Phosphothreonine mark. The region spanning 47–97 (TARRMVWVPSELHGFEAAALRDEGEEEAEVELAESGRRLRLPRDQIQRMNP) is the Myosin N-terminal SH3-like domain. The residue at position 56 (Ser-56) is a Phosphoserine. Residues 101 to 804 (SKAEDMAELT…VLAQLEEERD (704 aa)) form the Myosin motor domain. 194–201 (GESGAGKT) contributes to the ATP binding site. The interval 682–704 (LSRLMATLSNTNPSFVRCIVPNH) is actin-binding. The 30-residue stretch at 807 to 836 (VTDIIVSFQAAARGYLARRAFQRRQQQQSA) folds into the IQ domain. Residues 866–1951 (LQVTRQDEVL…VTTLRNRLRR (1086 aa)) are a coiled coil. A Phosphoserine modification is found at Ser-925. Residues 1173–1197 (RGELEDTLDSTNAQQELRSKREQEV) are disordered. At Thr-1198 the chain carries Phosphothreonine. Phosphoserine occurs at positions 1249 and 1280. 5 disordered regions span residues 1260 to 1311 (ELSS…AELE), 1597 to 1629 (HERD…RDEE), 1720 to 1751 (SDRA…TLEE), 1910 to 1942 (AEEE…NREV), and 1967 to 2000 (LEEG…ATPQ). Residues 1290-1304 (SDSERARSEAAEKLQ) are compositionally biased toward basic and acidic residues. Basic and acidic residues predominate over residues 1720–1732 (SDRARRQAQQDRD). Residues 1971-1980 (VASDEEEAEG) are compositionally biased toward acidic residues. 2 positions are modified to phosphoserine: Ser-1973 and Ser-1985. A compositionally biased stretch (low complexity) spans 1981–1991 (AEPGSAPGQEP). Thr-1998 bears the Phosphothreonine mark.

This sequence belongs to the TRAFAC class myosin-kinesin ATPase superfamily. Myosin family. In terms of assembly, myosin is a hexameric protein that consists of 2 heavy chain subunits (MHC), 2 alkali light chain subunits (MLC) and 2 regulatory light chain subunits (MLC-2). In terms of tissue distribution, highest levels in lung, kidney, brain and colon, very low levels in liver and bladder and no expression in spleen or seminal vesicle (at protein level). Isoform 1 is expressed in liver, kidney and testis with low levels in skeletal muscle and heart. Isoform 1 and isoform 2 are expressed in brain and lung. Isoform 2 is the main isoform expressed in skeletal muscle and heart. Isoform 3 is limited to brain stem, cerebellum and spinal cord.

Its function is as follows. Cellular myosin that appears to play a role in cytokinesis, cell shape, and specialized functions such as secretion and capping. The sequence is that of Myosin-14 (Myh14) from Mus musculus (Mouse).